The primary structure comprises 232 residues: Putative N-acetylmannosamine-6-phosphate 2-epimerase (232 aa).

This sequence belongs to the NanE family.

It carries out the reaction an N-acyl-D-glucosamine 6-phosphate = an N-acyl-D-mannosamine 6-phosphate. The protein operates within amino-sugar metabolism; N-acetylneuraminate degradation; D-fructose 6-phosphate from N-acetylneuraminate: step 3/5. Its function is as follows. Converts N-acetylmannosamine-6-phosphate (ManNAc-6-P) to N-acetylglucosamine-6-phosphate (GlcNAc-6-P). This chain is Putative N-acetylmannosamine-6-phosphate 2-epimerase, found in Proteus mirabilis (strain HI4320).